The primary structure comprises 224 residues: Putative carbamate hydrolase RutD (224 aa).

The AB hydrolase-1 domain occupies 14–115 (PVVVLISGLG…TVLVSVNGWL (102 aa)).

The protein belongs to the AB hydrolase superfamily. Hydrolase RutD family.

It carries out the reaction carbamate + 2 H(+) = NH4(+) + CO2. Its function is as follows. Involved in pyrimidine catabolism. May facilitate the hydrolysis of carbamate, a reaction that can also occur spontaneously. In Shigella dysenteriae serotype 1 (strain Sd197), this protein is Putative carbamate hydrolase RutD.